We begin with the raw amino-acid sequence, 377 residues long: 4-hydroxy-3-methylbut-2-en-1-yl diphosphate synthase (flavodoxin) (377 aa).

The [4Fe-4S] cluster site is built by Cys-272, Cys-275, Cys-307, and Glu-314.

This sequence belongs to the IspG family. It depends on [4Fe-4S] cluster as a cofactor.

The catalysed reaction is (2E)-4-hydroxy-3-methylbut-2-enyl diphosphate + oxidized [flavodoxin] + H2O + 2 H(+) = 2-C-methyl-D-erythritol 2,4-cyclic diphosphate + reduced [flavodoxin]. It functions in the pathway isoprenoid biosynthesis; isopentenyl diphosphate biosynthesis via DXP pathway; isopentenyl diphosphate from 1-deoxy-D-xylulose 5-phosphate: step 5/6. Its function is as follows. Converts 2C-methyl-D-erythritol 2,4-cyclodiphosphate (ME-2,4cPP) into 1-hydroxy-2-methyl-2-(E)-butenyl 4-diphosphate. This is 4-hydroxy-3-methylbut-2-en-1-yl diphosphate synthase (flavodoxin) from Zymomonas mobilis subsp. mobilis (strain ATCC 31821 / ZM4 / CP4).